We begin with the raw amino-acid sequence, 344 residues long: Dihydroorotate dehydrogenase (quinone) (344 aa).

FMN contacts are provided by residues 65-69 (AGLDK) and T89. K69 serves as a coordination point for substrate. Residue 114–118 (NRMGF) participates in substrate binding. The FMN site is built by N142 and N175. Position 175 (N175) interacts with substrate. S178 functions as the Nucleophile in the catalytic mechanism. N180 contacts substrate. The FMN site is built by K220 and T248. Residue 249–250 (NT) coordinates substrate. FMN-binding positions include G271, G300, and 321-322 (YT).

It belongs to the dihydroorotate dehydrogenase family. Type 2 subfamily. As to quaternary structure, monomer. FMN serves as cofactor.

The protein localises to the cell membrane. It carries out the reaction (S)-dihydroorotate + a quinone = orotate + a quinol. The protein operates within pyrimidine metabolism; UMP biosynthesis via de novo pathway; orotate from (S)-dihydroorotate (quinone route): step 1/1. Functionally, catalyzes the conversion of dihydroorotate to orotate with quinone as electron acceptor. The chain is Dihydroorotate dehydrogenase (quinone) from Paraburkholderia phymatum (strain DSM 17167 / CIP 108236 / LMG 21445 / STM815) (Burkholderia phymatum).